A 375-amino-acid polypeptide reads, in one-letter code: DNA replication and repair protein RecF (375 aa).

Residue 30–37 (GENAQGKT) coordinates ATP.

It belongs to the RecF family.

The protein resides in the cytoplasm. Its function is as follows. The RecF protein is involved in DNA metabolism; it is required for DNA replication and normal SOS inducibility. RecF binds preferentially to single-stranded, linear DNA. It also seems to bind ATP. The chain is DNA replication and repair protein RecF from Enterococcus faecalis (strain ATCC 700802 / V583).